The primary structure comprises 224 residues: Deoxyribose-phosphate aldolase (224 aa).

The Proton donor/acceptor role is filled by Asp91. Lys152 serves as the catalytic Schiff-base intermediate with acetaldehyde. Lys181 functions as the Proton donor/acceptor in the catalytic mechanism.

This sequence belongs to the DeoC/FbaB aldolase family. DeoC type 1 subfamily.

It is found in the cytoplasm. The enzyme catalyses 2-deoxy-D-ribose 5-phosphate = D-glyceraldehyde 3-phosphate + acetaldehyde. The protein operates within carbohydrate degradation; 2-deoxy-D-ribose 1-phosphate degradation; D-glyceraldehyde 3-phosphate and acetaldehyde from 2-deoxy-alpha-D-ribose 1-phosphate: step 2/2. Its function is as follows. Catalyzes a reversible aldol reaction between acetaldehyde and D-glyceraldehyde 3-phosphate to generate 2-deoxy-D-ribose 5-phosphate. This is Deoxyribose-phosphate aldolase from Mycoplasma pneumoniae (strain ATCC 29342 / M129 / Subtype 1) (Mycoplasmoides pneumoniae).